The chain runs to 217 residues: 3,4-dihydroxy-2-butanone 4-phosphate synthase (217 aa).

D-ribulose 5-phosphate is bound by residues 37–38, aspartate 42, 150–154, and glutamate 174; these read RE and RRGHT. Glutamate 38 serves as a coordination point for Mg(2+). Residue histidine 153 participates in Mg(2+) binding.

It belongs to the DHBP synthase family. Homodimer. It depends on Mg(2+) as a cofactor. Mn(2+) is required as a cofactor.

The enzyme catalyses D-ribulose 5-phosphate = (2S)-2-hydroxy-3-oxobutyl phosphate + formate + H(+). The protein operates within cofactor biosynthesis; riboflavin biosynthesis; 2-hydroxy-3-oxobutyl phosphate from D-ribulose 5-phosphate: step 1/1. Functionally, catalyzes the conversion of D-ribulose 5-phosphate to formate and 3,4-dihydroxy-2-butanone 4-phosphate. The protein is 3,4-dihydroxy-2-butanone 4-phosphate synthase of Desulforapulum autotrophicum (strain ATCC 43914 / DSM 3382 / VKM B-1955 / HRM2) (Desulfobacterium autotrophicum).